A 352-amino-acid polypeptide reads, in one-letter code: Phenylalanine--tRNA ligase alpha subunit (352 aa).

A Mg(2+)-binding site is contributed by E258.

The protein belongs to the class-II aminoacyl-tRNA synthetase family. Phe-tRNA synthetase alpha subunit type 1 subfamily. In terms of assembly, tetramer of two alpha and two beta subunits. It depends on Mg(2+) as a cofactor.

It localises to the cytoplasm. It carries out the reaction tRNA(Phe) + L-phenylalanine + ATP = L-phenylalanyl-tRNA(Phe) + AMP + diphosphate + H(+). The chain is Phenylalanine--tRNA ligase alpha subunit from Staphylococcus haemolyticus (strain JCSC1435).